The chain runs to 427 residues: Septin-8-B (427 aa).

The Septin-type G domain occupies 39–305 (QGFCFNILCV…ELYRRCKLEE (267 aa)). The G1 motif stretch occupies residues 49–56 (GETGIGKS). GTP-binding positions include 49–56 (GETGIGKS), glycine 104, 185–193 (KADTISKSE), glycine 239, and arginine 254. A G3 motif region spans residues 101–104 (DTVG). Positions 184–187 (AKAD) are G4 motif. Residues 320–407 (LQETYEAKRK…RRKVAMETLQ (88 aa)) are a coiled coil. The segment covering 406–418 (LQSQSFQATSQQP) has biased composition (polar residues). The interval 406–427 (LQSQSFQATSQQPLKKDKDRKN) is disordered.

Belongs to the TRAFAC class TrmE-Era-EngA-EngB-Septin-like GTPase superfamily. Septin GTPase family.

The sequence is that of Septin-8-B (sept8-b) from Xenopus laevis (African clawed frog).